The chain runs to 156 residues: Small ribosomal subunit protein uS7 (156 aa).

Belongs to the universal ribosomal protein uS7 family. Part of the 30S ribosomal subunit. Contacts proteins S9 and S11.

One of the primary rRNA binding proteins, it binds directly to 16S rRNA where it nucleates assembly of the head domain of the 30S subunit. Is located at the subunit interface close to the decoding center, probably blocks exit of the E-site tRNA. The polypeptide is Small ribosomal subunit protein uS7 (Alkaliphilus metalliredigens (strain QYMF)).